Here is a 436-residue protein sequence, read N- to C-terminus: uncharacterized protein (436 aa).

An N-terminal signal peptide occupies residues 1 to 18 (MMKRFVALSMAIFSLSFA).

This is an uncharacterized protein from Aquifex aeolicus (strain VF5).